The sequence spans 419 residues: Histidine--tRNA ligase (419 aa).

This sequence belongs to the class-II aminoacyl-tRNA synthetase family. Homodimer.

Its subcellular location is the cytoplasm. The catalysed reaction is tRNA(His) + L-histidine + ATP = L-histidyl-tRNA(His) + AMP + diphosphate + H(+). In Desulforamulus reducens (strain ATCC BAA-1160 / DSM 100696 / MI-1) (Desulfotomaculum reducens), this protein is Histidine--tRNA ligase.